A 562-amino-acid polypeptide reads, in one-letter code: Protein FAM222B (562 aa).

2 stretches are compositionally biased toward low complexity: residues 155 to 167 (QQAL…LAHA) and 183 to 201 (ALSH…HPQP). Disordered regions lie at residues 155 to 203 (QQAL…QPMA), 219 to 245 (LQHP…VTVS), and 537 to 562 (AHRA…PGYR).

Belongs to the FAM222 family.

The sequence is that of Protein FAM222B (FAM222B) from Homo sapiens (Human).